Here is a 92-residue protein sequence, read N- to C-terminus: MSLPSLDSVPVLRRGFRFQFEPAQDCHVLLYPEGMVKLNDSAGEILKLVDGRRDVAAIVAALRERFPEVPGIDEDILTFLEVAHAQFWIELQ.

The protein belongs to the PqqD family. Monomer. Interacts with PqqE.

It functions in the pathway cofactor biosynthesis; pyrroloquinoline quinone biosynthesis. In terms of biological role, functions as a PqqA binding protein and presents PqqA to PqqE, in the pyrroloquinoline quinone (PQQ) biosynthetic pathway. In Pseudomonas paraeruginosa (strain DSM 24068 / PA7) (Pseudomonas aeruginosa (strain PA7)), this protein is PqqA binding protein.